Consider the following 156-residue polypeptide: MRNVDKQDNLVRAFKALLKEERFGSQGDIVEALKNEGFDNINQSKVSRMLTKFGAVRTRNAKMEMVYCLPAELGVPTASSSLRELVLDVDYNNALVVIRTGPGAAQLIARLLDSLGKSEGILGVVAGDDTIFITPTLDVPVKELFHSVCELFEYAG.

This sequence belongs to the ArgR family.

Its subcellular location is the cytoplasm. The protein operates within amino-acid biosynthesis; L-arginine biosynthesis [regulation]. Functionally, regulates arginine biosynthesis genes. This is Arginine repressor from Vibrio cholerae serotype O1 (strain ATCC 39315 / El Tor Inaba N16961).